Consider the following 929-residue polypeptide: Isoleucine--tRNA ligase (929 aa).

Residues 57-67 (PYANGNIHVGH) carry the 'HIGH' region motif. E554 is an L-isoleucyl-5'-AMP binding site. The 'KMSKS' region signature appears at 595–599 (KMSKS). K598 contacts ATP. Residues C888, C891, C908, and C911 each contribute to the Zn(2+) site.

It belongs to the class-I aminoacyl-tRNA synthetase family. IleS type 1 subfamily. In terms of assembly, monomer. Requires Zn(2+) as cofactor.

The protein resides in the cytoplasm. The catalysed reaction is tRNA(Ile) + L-isoleucine + ATP = L-isoleucyl-tRNA(Ile) + AMP + diphosphate. In terms of biological role, catalyzes the attachment of isoleucine to tRNA(Ile). As IleRS can inadvertently accommodate and process structurally similar amino acids such as valine, to avoid such errors it has two additional distinct tRNA(Ile)-dependent editing activities. One activity is designated as 'pretransfer' editing and involves the hydrolysis of activated Val-AMP. The other activity is designated 'posttransfer' editing and involves deacylation of mischarged Val-tRNA(Ile). The chain is Isoleucine--tRNA ligase from Streptococcus thermophilus (strain ATCC BAA-491 / LMD-9).